A 126-amino-acid polypeptide reads, in one-letter code: Small ribosomal subunit protein bS6 (126 aa).

Positions 104–126 (QGAEKGKSSSKKVAAEAEASEEA) are disordered.

The protein belongs to the bacterial ribosomal protein bS6 family.

Its function is as follows. Binds together with bS18 to 16S ribosomal RNA. In Coxiella burnetii (strain Dugway 5J108-111), this protein is Small ribosomal subunit protein bS6.